The sequence spans 225 residues: Ribose-5-phosphate isomerase A (225 aa).

Substrate contacts are provided by residues 32–35, 85–88, and 98–101; these read TGST, DGAD, and KGGG. Glu107 serves as the catalytic Proton acceptor. Residue Lys125 participates in substrate binding.

It belongs to the ribose 5-phosphate isomerase family. As to quaternary structure, homodimer.

It catalyses the reaction aldehydo-D-ribose 5-phosphate = D-ribulose 5-phosphate. Its pathway is carbohydrate degradation; pentose phosphate pathway; D-ribose 5-phosphate from D-ribulose 5-phosphate (non-oxidative stage): step 1/1. In terms of biological role, catalyzes the reversible conversion of ribose-5-phosphate to ribulose 5-phosphate. This chain is Ribose-5-phosphate isomerase A, found in Marinobacter nauticus (strain ATCC 700491 / DSM 11845 / VT8) (Marinobacter aquaeolei).